A 559-amino-acid polypeptide reads, in one-letter code: Vacuolar protein 8 (559 aa).

Gly-2 is lipidated: N-myristoyl glycine. Residue Cys-4 is the site of S-palmitoyl cysteine attachment. ARM repeat units follow at residues 77-116, 118-157, 159-198, 200-239, 243-282, 284-323, 325-365, and 409-448; these read TERD…NLAV, TENK…NLAT, EENK…NMTH, DENR…NIAV, NRRK…NLAS, EKYQ…NISI, PMNE…NLAA, and DDLK…NLSS.

Belongs to the beta-catenin family.

It is found in the vacuole membrane. In terms of biological role, functions in both vacuole inheritance and protein targeting from the cytoplasm to vacuole. In Gibberella zeae (strain ATCC MYA-4620 / CBS 123657 / FGSC 9075 / NRRL 31084 / PH-1) (Wheat head blight fungus), this protein is Vacuolar protein 8 (VAC8).